A 65-amino-acid polypeptide reads, in one-letter code: Sec-independent protein translocase protein TatA (65 aa).

Residues 9–29 traverse the membrane as a helical segment; that stretch reads ILIIVLLVVVVFGVGKLPQVG. Positions 40-65 are disordered; sequence RKASTGEDAKEEVETKEETKPAEKSE. Basic and acidic residues predominate over residues 43-65; the sequence is STGEDAKEEVETKEETKPAEKSE.

The protein belongs to the TatA/E family. Forms a complex with TatC.

It is found in the cell membrane. Part of the twin-arginine translocation (Tat) system that transports large folded proteins containing a characteristic twin-arginine motif in their signal peptide across membranes. TatA could form the protein-conducting channel of the Tat system. In Dehalococcoides mccartyi (strain ATCC BAA-2100 / JCM 16839 / KCTC 5957 / BAV1), this protein is Sec-independent protein translocase protein TatA.